The primary structure comprises 520 residues: Maturase K (520 aa).

It belongs to the intron maturase 2 family. MatK subfamily.

The protein resides in the plastid. The protein localises to the chloroplast. In terms of biological role, usually encoded in the trnK tRNA gene intron. Probably assists in splicing its own and other chloroplast group II introns. The chain is Maturase K from Maianthemum dilatatum (False lily-of-the-valley).